The chain runs to 298 residues: dTDP-4-dehydrorhamnose reductase (298 aa).

NADH-binding positions include 10 to 12 (GQV), 35 to 36 (DL), and 59 to 61 (AYT). Residues 11–12 (QV), 35–36 (DL), 59–61 (AYT), and tyrosine 98 each bind NADPH. 100-101 (TD) lines the dTDP-beta-L-rhamnose pocket. Positions 124 and 128 each coordinate NADH. NADPH contacts are provided by tyrosine 124 and lysine 128. Residue tyrosine 124 is the Proton donor/acceptor of the active site. Tryptophan 149 lines the dTDP-beta-L-rhamnose pocket.

The protein belongs to the dTDP-4-dehydrorhamnose reductase family. Homodimer. Requires Mg(2+) as cofactor.

It carries out the reaction dTDP-beta-L-rhamnose + NADP(+) = dTDP-4-dehydro-beta-L-rhamnose + NADPH + H(+). It functions in the pathway carbohydrate biosynthesis; dTDP-L-rhamnose biosynthesis. It participates in bacterial outer membrane biogenesis; LPS O-antigen biosynthesis. Involved in the biosynthesis of the dTDP-L-rhamnose which is an important component of lipopolysaccharide (LPS). Catalyzes the reduction of dTDP-6-deoxy-L-lyxo-4-hexulose to yield dTDP-L-rhamnose. In Burkholderia thailandensis (strain ATCC 700388 / DSM 13276 / CCUG 48851 / CIP 106301 / E264), this protein is dTDP-4-dehydrorhamnose reductase.